Reading from the N-terminus, the 168-residue chain is Photosystem I assembly protein Ycf3 (168 aa).

3 TPR repeats span residues 35 to 68, 72 to 105, and 120 to 153; these read AFTY…EIDP, SYIL…NPFL, and GEQA…TPGN.

Belongs to the Ycf3 family.

It localises to the plastid. Its subcellular location is the chloroplast thylakoid membrane. Its function is as follows. Essential for the assembly of the photosystem I (PSI) complex. May act as a chaperone-like factor to guide the assembly of the PSI subunits. The chain is Photosystem I assembly protein Ycf3 from Liriodendron tulipifera (Tuliptree).